Reading from the N-terminus, the 216-residue chain is MALCLKQVFAKDKTFRPRKRFEPGTQRFELYKKAQASLKSGLDLRSVVRLPPGENIDDWIAVHVVDFFNRINLIYGTMAERCSETSCPVMAGGPRYEYRWQDERQYRRPAKLSAPRYMALLMDWIEGLINDEEVFPTRVGVPFPKNFQQVCTKILTRLFRVFVHVYIHHFDSILSMGAEAHVNTCYKHFYYFIREFSLVDQRELEPLREMTERICH.

Zn(2+)-binding residues include cysteine 82, cysteine 87, histidine 164, and histidine 169.

It belongs to the MOB1/phocein family.

Its function is as follows. May regulate the activity of kinases. The protein is MOB kinase activator 3C (MOB3C) of Homo sapiens (Human).